Here is a 275-residue protein sequence, read N- to C-terminus: Large ribosomal subunit protein uL2 (275 aa).

Residues 223-275 (VAMNPVDHPHGGGEGRTSGGRHPVSPWGQPTKGYKTRSNKRTDKYIVRRRNKK) form a disordered region.

Belongs to the universal ribosomal protein uL2 family. As to quaternary structure, part of the 50S ribosomal subunit. Forms a bridge to the 30S subunit in the 70S ribosome.

Its function is as follows. One of the primary rRNA binding proteins. Required for association of the 30S and 50S subunits to form the 70S ribosome, for tRNA binding and peptide bond formation. It has been suggested to have peptidyltransferase activity; this is somewhat controversial. Makes several contacts with the 16S rRNA in the 70S ribosome. The protein is Large ribosomal subunit protein uL2 of Shewanella halifaxensis (strain HAW-EB4).